A 94-amino-acid polypeptide reads, in one-letter code: Copper resistance protein K (94 aa).

The signal sequence occupies residues 1–20 (MKQKLMVGAFIAAVSLSAAA).

As to quaternary structure, monomer in the copper-bound form. Homodimer as apoprotein. Dissociates into monomers upon copper binding.

It is found in the periplasm. Its function is as follows. Involved in resistance to copper. Can bind up to 2 copper ions. Has higher affinity for Cu(+) than for Cu(2+). In Cupriavidus metallidurans (strain ATCC 43123 / DSM 2839 / NBRC 102507 / CH34) (Ralstonia metallidurans), this protein is Copper resistance protein K (copK).